A 281-amino-acid chain; its full sequence is Nucleotide-binding protein Noc_2797 (281 aa).

8–15 (GVSGSGKS) contacts ATP. GTP is bound at residue 58–61 (DARN).

The protein belongs to the RapZ-like family.

Displays ATPase and GTPase activities. This is Nucleotide-binding protein Noc_2797 from Nitrosococcus oceani (strain ATCC 19707 / BCRC 17464 / JCM 30415 / NCIMB 11848 / C-107).